The sequence spans 335 residues: Beta-1,4-mannooligosaccharide phosphorylase (335 aa).

It belongs to the glycosyl hydrolase 130 family. In terms of assembly, homohexamer in solution.

The enzyme catalyses [(1-&gt;4)-beta-D-mannosyl](n) + phosphate = [(1-&gt;4)-beta-D-mannosyl](n-1) + alpha-D-mannose 1-phosphate. Catalyzes the phosphorolysis of beta-1,4-mannooligosaccharides to mannose 1-phosphate (Man1P) and shorter mannooligosaccharides. Can also catalyze the phosphorolysis of 4-O-beta-D-mannopyranosyl-D-glucopyranose (Man-Glc), but shows higher activity toward longer mannooligosaccharides. Involved in a mannan catabolic pathway which feeds into glycolysis. The chain is Beta-1,4-mannooligosaccharide phosphorylase from Ruminococcus albus (strain ATCC 27210 / DSM 20455 / JCM 14654 / NCDO 2250 / 7).